Consider the following 515-residue polypeptide: Bifunctional purine biosynthesis protein PurH (515 aa).

Positions 1 to 145 constitute an MGS-like domain; it reads MTKRALISVS…KNHASVTVVV (145 aa).

It belongs to the PurH family.

It catalyses the reaction (6R)-10-formyltetrahydrofolate + 5-amino-1-(5-phospho-beta-D-ribosyl)imidazole-4-carboxamide = 5-formamido-1-(5-phospho-D-ribosyl)imidazole-4-carboxamide + (6S)-5,6,7,8-tetrahydrofolate. The catalysed reaction is IMP + H2O = 5-formamido-1-(5-phospho-D-ribosyl)imidazole-4-carboxamide. Its pathway is purine metabolism; IMP biosynthesis via de novo pathway; 5-formamido-1-(5-phospho-D-ribosyl)imidazole-4-carboxamide from 5-amino-1-(5-phospho-D-ribosyl)imidazole-4-carboxamide (10-formyl THF route): step 1/1. The protein operates within purine metabolism; IMP biosynthesis via de novo pathway; IMP from 5-formamido-1-(5-phospho-D-ribosyl)imidazole-4-carboxamide: step 1/1. The polypeptide is Bifunctional purine biosynthesis protein PurH (Streptococcus pyogenes serotype M12 (strain MGAS2096)).